Here is a 68-residue protein sequence, read N- to C-terminus: Large ribosomal subunit protein bL31 (68 aa).

4 residues coordinate Zn(2+): C16, C18, C36, and C39.

Belongs to the bacterial ribosomal protein bL31 family. Type A subfamily. Part of the 50S ribosomal subunit. Zn(2+) serves as cofactor.

Functionally, binds the 23S rRNA. In Dictyoglomus turgidum (strain DSM 6724 / Z-1310), this protein is Large ribosomal subunit protein bL31.